The primary structure comprises 194 residues: Peptidyl-tRNA hydrolase (194 aa).

Position 21 (Y21) interacts with tRNA. The active-site Proton acceptor is H26. TRNA contacts are provided by Y72, N74, and N120.

The protein belongs to the PTH family. As to quaternary structure, monomer.

The protein resides in the cytoplasm. The enzyme catalyses an N-acyl-L-alpha-aminoacyl-tRNA + H2O = an N-acyl-L-amino acid + a tRNA + H(+). Functionally, hydrolyzes ribosome-free peptidyl-tRNAs (with 1 or more amino acids incorporated), which drop off the ribosome during protein synthesis, or as a result of ribosome stalling. Catalyzes the release of premature peptidyl moieties from peptidyl-tRNA molecules trapped in stalled 50S ribosomal subunits, and thus maintains levels of free tRNAs and 50S ribosomes. This chain is Peptidyl-tRNA hydrolase, found in Halorhodospira halophila (strain DSM 244 / SL1) (Ectothiorhodospira halophila (strain DSM 244 / SL1)).